We begin with the raw amino-acid sequence, 878 residues long: MDLDKPSVWGSLKQRTRPLLINLSKKKAKKSPSKPLDLRVQHHLDRRLSLSVPDLLEAEALAPEGRPYSGPQSSYISVPNSLSTAGIVPKSSSSSLKQSEEELDWSQEEASHVHGVDTDSEEIYASPAEEWQAFSQSALDLHKPSLGRDAPEEHDKTHGNDDLNASMTSQHFEEESTLGEASDCVSHLPSPFAYLLTIHLKEGRNLVVRDRCGTSDPYVKFKLNGKTLYKSKVIYKNLNPIWDEIVVLPIQSLDQKLRVKVYDRDLTKSDFMGSAFVVLRDLELNRTTEHILKLEDPNSLEDDMGVIVLNLNLVVKQGDFKRHRWSNRKRLSASKSSLIRNLRLSESLRKNQLWNGIISITLLEGKNVSGGNMTEMFVQLKLGEQRYKSKTLCKSANPQWQEQFDFHYFSDRMGILDIEVWGKDSKKHEERLGTCKVDISALPLKQDNCLELPLESCQGALLMLITLTPCTGVSISDLCVCPFEDPSERQQISQRYAFQNSLKDVKDVGILQVKVLKASDLLAADFSGKSDPFCLLELGNDRLQTHTIYKNLNPEWNKVFTFPIKDIHDVLEVTVFDEDGDKAPDFLGKVAIPLLSIRDGQPNCYVLKNKDLEQAFKGLIYLELDLIYNPVKASIRTFTPREKRFVEDSRKLSKKILSRDVDRVKRLTLAIWNTVQFFKSCFQWESTLRSTIAFVVFLVTVWNFELYMIPLALLLLFLYNFLRPMKGKASSTQDSQESTDVEEEGKEEEKESEKKGIIERIYMVQDIVSTVQNILEEVASFGERIKNVFNWTVPFLSLLACLILAITTVILYFIPLRYIILLWGINKFTKKLRNPYSIDNNELLDFLSRVPSDIQKVQYAELKLCGSHSPLRKKRSTV.

2 disordered regions span residues 20-40 (LINL…DLRV) and 143-178 (KPSL…ESTL). The span at 149-161 (DAPEEHDKTHGND) shows a compositional bias: basic and acidic residues. C2 domains are found at residues 177-292 (TLGE…EHIL), 334-452 (SKSS…CLEL), and 486-607 (PSER…CYVL). Positions 210, 216, 263, 265, and 270 each coordinate Ca(2+). Ca(2+)-binding residues include Asp-525, Asp-531, Asp-577, Asp-579, and Asp-585. A helical transmembrane segment spans residues 694-714 (FVVFLVTVWNFELYMIPLALL). The segment at 728–752 (KASSTQDSQESTDVEEEGKEEEKES) is disordered. Residues 737 to 746 (ESTDVEEEGK) show a composition bias toward acidic residues. A helical transmembrane segment spans residues 794-814 (PFLSLLACLILAITTVILYFI).

It belongs to the MCTP family. Requires Ca(2+) as cofactor.

It is found in the membrane. Functionally, might play a role in the development of cardiac outflow tract. The chain is Multiple C2 and transmembrane domain-containing protein 2 (Mctp2) from Mus musculus (Mouse).